The sequence spans 201 residues: Probable molybdenum cofactor guanylyltransferase (201 aa).

GTP is bound by residues 20-22, K32, D77, and D106; that span reads LAG. Residue D106 coordinates Mg(2+).

It belongs to the MobA family. Mg(2+) is required as a cofactor.

The protein localises to the cytoplasm. The enzyme catalyses Mo-molybdopterin + GTP + H(+) = Mo-molybdopterin guanine dinucleotide + diphosphate. Its function is as follows. Transfers a GMP moiety from GTP to Mo-molybdopterin (Mo-MPT) cofactor (Moco or molybdenum cofactor) to form Mo-molybdopterin guanine dinucleotide (Mo-MGD) cofactor. This chain is Probable molybdenum cofactor guanylyltransferase, found in Aquifex aeolicus (strain VF5).